Reading from the N-terminus, the 229-residue chain is Ribonuclease 3 (229 aa).

Residues 5–127 (LSRLERQLGY…LIGAIYLDAG (123 aa)) enclose the RNase III domain. Glu40 is a Mg(2+) binding site. Residue Asp44 is part of the active site. Asp113 and Glu116 together coordinate Mg(2+). Glu116 is a catalytic residue. Residues 154–224 (DPKTRLQEFL…AAAALIALGV (71 aa)) form the DRBM domain.

It belongs to the ribonuclease III family. In terms of assembly, homodimer. Requires Mg(2+) as cofactor.

It localises to the cytoplasm. The catalysed reaction is Endonucleolytic cleavage to 5'-phosphomonoester.. Its function is as follows. Digests double-stranded RNA. Involved in the processing of primary rRNA transcript to yield the immediate precursors to the large and small rRNAs (23S and 16S). Processes some mRNAs, and tRNAs when they are encoded in the rRNA operon. Processes pre-crRNA and tracrRNA of type II CRISPR loci if present in the organism. The protein is Ribonuclease 3 of Pseudomonas syringae pv. syringae (strain B728a).